The sequence spans 398 residues: 8-amino-7-oxononanoate synthase (398 aa).

Arg-26 lines the substrate pocket. A pyridoxal 5'-phosphate-binding site is contributed by 113–114 (GF). Substrate is bound at residue His-138. Pyridoxal 5'-phosphate is bound by residues Ser-181, His-209, and Thr-238. At Lys-241 the chain carries N6-(pyridoxal phosphate)lysine. Thr-355 contributes to the substrate binding site.

This sequence belongs to the class-II pyridoxal-phosphate-dependent aminotransferase family. BioF subfamily. As to quaternary structure, homodimer. Pyridoxal 5'-phosphate serves as cofactor.

The enzyme catalyses 6-carboxyhexanoyl-[ACP] + L-alanine + H(+) = (8S)-8-amino-7-oxononanoate + holo-[ACP] + CO2. The protein operates within cofactor biosynthesis; biotin biosynthesis. Catalyzes the decarboxylative condensation of pimeloyl-[acyl-carrier protein] and L-alanine to produce 8-amino-7-oxononanoate (AON), [acyl-carrier protein], and carbon dioxide. In Aeromonas hydrophila subsp. hydrophila (strain ATCC 7966 / DSM 30187 / BCRC 13018 / CCUG 14551 / JCM 1027 / KCTC 2358 / NCIMB 9240 / NCTC 8049), this protein is 8-amino-7-oxononanoate synthase.